A 309-amino-acid chain; its full sequence is HPr kinase/phosphorylase (309 aa).

Active-site residues include H138 and K159. An ATP-binding site is contributed by 153 to 160; it reads GKSGIGKS. S160 contacts Mg(2+). D177 functions as the Proton acceptor; for phosphorylation activity. Proton donor; for dephosphorylation activity in the catalytic mechanism. Residues 201 to 210 are important for the catalytic mechanism of both phosphorylation and dephosphorylation; the sequence is IEVRGIGILD. A Mg(2+)-binding site is contributed by E202. Residue R243 is part of the active site. Residues 264-269 form an important for the catalytic mechanism of dephosphorylation region; that stretch reads PIKPAR.

This sequence belongs to the HPrK/P family. As to quaternary structure, homohexamer. The cofactor is Mg(2+).

It carries out the reaction [HPr protein]-L-serine + ATP = [HPr protein]-O-phospho-L-serine + ADP + H(+). The enzyme catalyses [HPr protein]-O-phospho-L-serine + phosphate + H(+) = [HPr protein]-L-serine + diphosphate. Catalyzes the ATP- as well as the pyrophosphate-dependent phosphorylation of a specific serine residue in HPr, a phosphocarrier protein of the phosphoenolpyruvate-dependent sugar phosphotransferase system (PTS). HprK/P also catalyzes the pyrophosphate-producing, inorganic phosphate-dependent dephosphorylation (phosphorolysis) of seryl-phosphorylated HPr (P-Ser-HPr). The two antagonistic activities of HprK/P are regulated by several intracellular metabolites, which change their concentration in response to the absence or presence of rapidly metabolisable carbon sources (glucose, fructose, etc.) in the growth medium. Therefore, by controlling the phosphorylation state of HPr, HPrK/P is a sensor enzyme that plays a major role in the regulation of carbon metabolism and sugar transport: it mediates carbon catabolite repression (CCR), and regulates PTS-catalyzed carbohydrate uptake and inducer exclusion. This is HPr kinase/phosphorylase from Alkaliphilus metalliredigens (strain QYMF).